The primary structure comprises 108 residues: Precursor of CEP16 (108 aa).

Residues 1–27 (MVMAKNLTKFYVVFLVVLMMVVSLLLA) form the signal peptide. The propeptide occupies 28-92 (IEGRPVKDSS…VGHHRAKGYK (65 aa)). 2 N-linked (GlcNAc...) asparagine glycosylation sites follow: N50 and N98. Positions 76 to 108 (QSGPSPGVGHHRAKGYKMFGRANDSGPSPGVGH) are disordered. Hydroxyproline occurs at positions 102 and 104.

It belongs to the C-terminally encoded plant signaling peptide (CEP) family. In terms of assembly, interacts with CEP receptors (e.g. CEPR1 and CEPR2). In terms of processing, the mature small signaling peptide is generated by proteolytic processing of the longer precursor.

The protein localises to the secreted. It is found in the extracellular space. The protein resides in the apoplast. Its function is as follows. Extracellular signaling peptide that may regulate primary root growth rate and systemic nitrogen (N)-demand signaling. This chain is Precursor of CEP16, found in Arabidopsis thaliana (Mouse-ear cress).